Reading from the N-terminus, the 296-residue chain is uncharacterized protein (296 aa).

This sequence to Synechocystis PCC 6803 sll0787 and M.jannaschii MJ0640.

This is an uncharacterized protein from Methanocaldococcus jannaschii (strain ATCC 43067 / DSM 2661 / JAL-1 / JCM 10045 / NBRC 100440) (Methanococcus jannaschii).